Consider the following 391-residue polypeptide: 3-demethoxyubiquinol 3-hydroxylase (391 aa).

It belongs to the UbiH/COQ6 family. As to quaternary structure, component of the Ubi complex metabolon, which regroups five ubiquinone biosynthesis proteins (UbiE, UbiF, UbiG, UbiH and UbiI) and two accessory factors (UbiK and the lipid-binding protein UbiJ). It depends on FAD as a cofactor.

It localises to the cytoplasm. It carries out the reaction a 5-methoxy-2-methyl-3-(all-trans-polyprenyl)benzene-1,4-diol + AH2 + O2 = a 3-demethylubiquinol + A + H2O. It participates in cofactor biosynthesis; ubiquinone biosynthesis. Functionally, catalyzes the hydroxylation of 2-octaprenyl-3-methyl-6-methoxy-1,4-benzoquinol during ubiquinone biosynthesis. The sequence is that of 3-demethoxyubiquinol 3-hydroxylase (ubiF) from Escherichia coli (strain K12).